A 208-amino-acid polypeptide reads, in one-letter code: MASLCLSLHQTLTNPLSAPRCRPLSLSFPGSSTFSIRPSSRRATALTTRASYTPTPATERVISIASYALPFFNSLQYGRFLFAQYPRLGLLFEPIFPILNLYRSVPYASFVAFFGLYLGVVRNTSFSRYVRFNAMQAVTLDVLLAVPVLLTRILDPGQGGGFGMKAMMWGHTGVFVFSFMCFVYGVVSSLLGKTPYIPFVADAAGRQL.

A chloroplast-targeting transit peptide spans 1-49; it reads MASLCLSLHQTLTNPLSAPRCRPLSLSFPGSSTFSIRPSSRRATALTTR. Helical transmembrane passes span 61 to 83, 101 to 121, 134 to 154, and 172 to 192; these read VISI…FLFA, LYRS…LGVV, AMQA…TRIL, and TGVF…SLLG.

The protein belongs to the Tic20 family. Part of the Tic complex. As to expression, expressed in leaves, siliques and roots.

The protein localises to the plastid. It localises to the chloroplast inner membrane. In terms of biological role, may be involved in protein precursor import into chloroplasts. Not redundant with TIC20-I, TIC20-IV or TIC20-V. The polypeptide is Protein TIC 20-II, chloroplastic (TIC20-II) (Arabidopsis thaliana (Mouse-ear cress)).